The primary structure comprises 115 residues: Ig kappa chain V region 3315 (115 aa).

The framework-1 stretch occupies residues 1–24 (AQIVMTQTPSSVSAAVGGTVTINC). Positions 25–37 (QSSQSVYENGRLS) are complementarity-determining-1. Residues 38–52 (WFQQKPGQPPKRLIY) are framework-2. Residues 53–59 (RASTLAS) form a complementarity-determining-2 region. The framework-3 stretch occupies residues 60-91 (GVSSRFTGSGSGTQFTLSISDVQCDDAATYYC). The segment at 92–104 (LGNYDCSSGDSFT) is complementarity-determining-3. Residues 105–114 (FGGGTEVVVK) form a framework-4 region.

The polypeptide is Ig kappa chain V region 3315 (Oryctolagus cuniculus (Rabbit)).